The primary structure comprises 252 residues: 5'-nucleotidase SurE (252 aa).

A divalent metal cation-binding residues include D8, D9, S39, and N91.

This sequence belongs to the SurE nucleotidase family. Requires a divalent metal cation as cofactor.

It localises to the cytoplasm. The catalysed reaction is a ribonucleoside 5'-phosphate + H2O = a ribonucleoside + phosphate. Its function is as follows. Nucleotidase that shows phosphatase activity on nucleoside 5'-monophosphates. The protein is 5'-nucleotidase SurE of Paraburkholderia xenovorans (strain LB400).